The following is a 374-amino-acid chain: Large ribosomal subunit protein uL4 (374 aa).

The segment at 336–355 (EKAMAKGMQNKKNREARHAA) is disordered.

Belongs to the universal ribosomal protein uL4 family.

The polypeptide is Large ribosomal subunit protein uL4 (RPL4) (Trypanosoma brucei brucei).